A 330-amino-acid chain; its full sequence is ADP-L-glycero-D-manno-heptose-6-epimerase (330 aa).

Residues 11–12 (FI), 32–33 (DD), Gln39, Gln54, 75–79 (QGACA), and Asn92 each bind NADP(+). The Proton acceptor role is filled by Tyr139. An NADP(+)-binding site is contributed by Lys143. Asn168 contributes to the substrate binding site. NADP(+)-binding residues include Val169 and Lys177. Lys177 serves as the catalytic Proton acceptor. Substrate is bound by residues Arg179, His186, 200 to 203 (FGEH), Arg213, and Tyr292.

Belongs to the NAD(P)-dependent epimerase/dehydratase family. HldD subfamily. In terms of assembly, homopentamer. The cofactor is NADP(+).

It carries out the reaction ADP-D-glycero-beta-D-manno-heptose = ADP-L-glycero-beta-D-manno-heptose. It participates in nucleotide-sugar biosynthesis; ADP-L-glycero-beta-D-manno-heptose biosynthesis; ADP-L-glycero-beta-D-manno-heptose from D-glycero-beta-D-manno-heptose 7-phosphate: step 4/4. Its pathway is bacterial outer membrane biogenesis; LPS core biosynthesis. Catalyzes the interconversion between ADP-D-glycero-beta-D-manno-heptose and ADP-L-glycero-beta-D-manno-heptose via an epimerization at carbon 6 of the heptose. The chain is ADP-L-glycero-D-manno-heptose-6-epimerase from Pseudomonas aeruginosa (strain ATCC 15692 / DSM 22644 / CIP 104116 / JCM 14847 / LMG 12228 / 1C / PRS 101 / PAO1).